A 392-amino-acid polypeptide reads, in one-letter code: Stilbene synthase 2 (392 aa).

55 to 58 (KFNR) lines the substrate pocket. Cys-164 is a catalytic residue. Substrate is bound by residues Leu-267 and 305 to 307 (GGP).

This sequence belongs to the thiolase-like superfamily. Chalcone/stilbene synthases family. Homodimer.

The protein resides in the cytoplasm. The enzyme catalyses 4-coumaroyl-CoA + 3 malonyl-CoA + 3 H(+) = trans-resveratrol + 4 CO2 + 4 CoA. Its pathway is phytoalexin biosynthesis; 3,4',5-trihydroxystilbene biosynthesis; 3,4',5-trihydroxystilbene from trans-4-coumarate: step 2/2. Its function is as follows. Mediates resistance to pathogens which are sensitive to stilbenes. This chain is Stilbene synthase 2, found in Vitis vinifera (Grape).